A 331-amino-acid polypeptide reads, in one-letter code: UPF0324 membrane protein SAS0317 (331 aa).

The next 11 helical transmembrane spans lie at 9–26, 31–48, 69–88, 93–115, 122–144, 154–176, 183–202, 217–234, 247–269, 273–295, and 308–330; these read FMIG…SFLA, ILDK…AILY, LLRF…DIIG, LLAI…NKLL, ALLL…APIF, SIGI…YAIF, YGAW…LAGG, LGRV…ILIM, ISIP…VTIP, LNIL…GLNV, and LMTI…HWLY.

This sequence belongs to the UPF0324 family.

The protein localises to the cell membrane. The sequence is that of UPF0324 membrane protein SAS0317 from Staphylococcus aureus (strain MSSA476).